We begin with the raw amino-acid sequence, 457 residues long: tRNA (guanine(37)-N(1))-methyltransferase (457 aa).

S-adenosyl-L-methionine-binding positions include His240, 278–279 (DL), 306–307 (DG), and Asn338.

The protein belongs to the class I-like SAM-binding methyltransferase superfamily. TRM5/TYW2 family. Monomer.

The protein localises to the mitochondrion matrix. Its subcellular location is the nucleus. The protein resides in the cytoplasm. It catalyses the reaction guanosine(37) in tRNA + S-adenosyl-L-methionine = N(1)-methylguanosine(37) in tRNA + S-adenosyl-L-homocysteine + H(+). Its function is as follows. Specifically methylates the N1 position of guanosine-37 in various cytoplasmic and mitochondrial tRNAs. Methylation is not dependent on the nature of the nucleoside 5' of the target nucleoside. This is the first step in the biosynthesis of wybutosine (yW), a modified base adjacent to the anticodon of tRNAs and required for accurate decoding. The protein is tRNA (guanine(37)-N(1))-methyltransferase of Drosophila melanogaster (Fruit fly).